The primary structure comprises 417 residues: Multifunctional CCA protein (417 aa).

ATP-binding residues include G8 and R11. The CTP site is built by G8 and R11. D21 and D23 together coordinate Mg(2+). R91, R137, and R140 together coordinate ATP. Residues R91, R137, and R140 each coordinate CTP. In terms of domain architecture, HD spans 225–326 (SGIHTLMTLQ…LNVLKKTDAF (102 aa)).

This sequence belongs to the tRNA nucleotidyltransferase/poly(A) polymerase family. Bacterial CCA-adding enzyme type 1 subfamily. Monomer. Can also form homodimers and oligomers. Requires Mg(2+) as cofactor. It depends on Ni(2+) as a cofactor.

It catalyses the reaction a tRNA precursor + 2 CTP + ATP = a tRNA with a 3' CCA end + 3 diphosphate. The catalysed reaction is a tRNA with a 3' CCA end + 2 CTP + ATP = a tRNA with a 3' CCACCA end + 3 diphosphate. Catalyzes the addition and repair of the essential 3'-terminal CCA sequence in tRNAs without using a nucleic acid template. Adds these three nucleotides in the order of C, C, and A to the tRNA nucleotide-73, using CTP and ATP as substrates and producing inorganic pyrophosphate. tRNA 3'-terminal CCA addition is required both for tRNA processing and repair. Also involved in tRNA surveillance by mediating tandem CCA addition to generate a CCACCA at the 3' terminus of unstable tRNAs. While stable tRNAs receive only 3'-terminal CCA, unstable tRNAs are marked with CCACCA and rapidly degraded. This chain is Multifunctional CCA protein, found in Neisseria meningitidis serogroup B (strain ATCC BAA-335 / MC58).